We begin with the raw amino-acid sequence, 312 residues long: Ribose-phosphate pyrophosphokinase (312 aa).

Residues 34–36 (DLE) and 93–94 (RQ) each bind ATP. Residues histidine 127 and aspartate 168 each coordinate Mg(2+). Lysine 192 is an active-site residue. D-ribose 5-phosphate is bound by residues arginine 194, aspartate 218, and 222–226 (DSAGT).

This sequence belongs to the ribose-phosphate pyrophosphokinase family. Class I subfamily. Homohexamer. It depends on Mg(2+) as a cofactor.

The protein resides in the cytoplasm. It carries out the reaction D-ribose 5-phosphate + ATP = 5-phospho-alpha-D-ribose 1-diphosphate + AMP + H(+). It functions in the pathway metabolic intermediate biosynthesis; 5-phospho-alpha-D-ribose 1-diphosphate biosynthesis; 5-phospho-alpha-D-ribose 1-diphosphate from D-ribose 5-phosphate (route I): step 1/1. Its function is as follows. Involved in the biosynthesis of the central metabolite phospho-alpha-D-ribosyl-1-pyrophosphate (PRPP) via the transfer of pyrophosphoryl group from ATP to 1-hydroxyl of ribose-5-phosphate (Rib-5-P). The polypeptide is Ribose-phosphate pyrophosphokinase (Caulobacter vibrioides (strain ATCC 19089 / CIP 103742 / CB 15) (Caulobacter crescentus)).